The sequence spans 589 residues: Aspartate--tRNA ligase (589 aa).

Glu171 contacts L-aspartate. The tract at residues 195–198 is aspartate; that stretch reads QLFK. Arg217 contacts L-aspartate. ATP is bound by residues 217–219 and Gln226; that span reads RDE. His448 lines the L-aspartate pocket. Residue Glu482 coordinates ATP. An L-aspartate-binding site is contributed by Arg489. 534–537 contacts ATP; it reads GLDR.

The protein belongs to the class-II aminoacyl-tRNA synthetase family. Type 1 subfamily. As to quaternary structure, homodimer.

The protein localises to the cytoplasm. It catalyses the reaction tRNA(Asp) + L-aspartate + ATP = L-aspartyl-tRNA(Asp) + AMP + diphosphate. In terms of biological role, catalyzes the attachment of L-aspartate to tRNA(Asp) in a two-step reaction: L-aspartate is first activated by ATP to form Asp-AMP and then transferred to the acceptor end of tRNA(Asp). The chain is Aspartate--tRNA ligase from Idiomarina loihiensis (strain ATCC BAA-735 / DSM 15497 / L2-TR).